We begin with the raw amino-acid sequence, 143 residues long: Small ribosomal subunit protein uS9 (143 aa).

Ser2 carries the N-acetylserine modification. Positions 123-143 are disordered; sequence MPEPKKFGGKGARSRYQKSYR. Residues 134-143 are compositionally biased toward basic residues; sequence ARSRYQKSYR.

It belongs to the universal ribosomal protein uS9 family.

In Maudiozyma exigua (Yeast), this protein is Small ribosomal subunit protein uS9 (RPS16).